Consider the following 143-residue polypeptide: Large ribosomal subunit protein uL15 (143 aa).

The disordered stretch occupies residues 1 to 57; that stretch reads MQLNNLKPAAGSKHAKRRVGRGIGSGLGKTAGRGHKGQKSRSGGFHKVGFEGGQMPL. Positions 21–31 are enriched in gly residues; it reads RGIGSGLGKTA.

Belongs to the universal ribosomal protein uL15 family. As to quaternary structure, part of the 50S ribosomal subunit.

In terms of biological role, binds to the 23S rRNA. This Ralstonia pickettii (strain 12J) protein is Large ribosomal subunit protein uL15.